Reading from the N-terminus, the 849-residue chain is Autoinducer 1 sensor kinase/phosphatase LuxN (849 aa).

7 helical membrane passes run isoleucine 9–phenylalanine 29, valine 41–isoleucine 61, serine 160–methionine 180, isoleucine 196–phenylalanine 216, phenylalanine 220–leucine 242, tyrosine 251–isoleucine 275, and tryptophan 283–tyrosine 301. Positions serine 468–proline 683 constitute a Histidine kinase domain. At histidine 471 the chain carries Phosphohistidine; by autocatalysis. One can recognise a Response regulatory domain in the interval threonine 722–leucine 835. Aspartate 771 carries the post-translational modification 4-aspartylphosphate.

The protein resides in the cell inner membrane. It catalyses the reaction ATP + protein L-histidine = ADP + protein N-phospho-L-histidine.. At low cell density, in the absence of AI-1 (autoinducer 1), LuxN has a kinase activity and autophosphorylates on His-471. The phosphoryl group is then transferred on Asp-771 of the response regulator domain. The phosphoryl group is transferred to LuxU, and ultimately to LuxO. At high cell density, in the presence of AI-1, the kinase activity is inactivated, and the response regulator domain has a phosphatase activity. LuxN phosphatase acts on itself. As LuxU could function to establish an equilibrium between the aspartyl-phosphate of LuxN and the aspartyl-phosphate of LuxO, LuxU transfers phosphate from LuxO to LuxN and finally phosphate is drained from the system. The polypeptide is Autoinducer 1 sensor kinase/phosphatase LuxN (luxN) (Vibrio harveyi (Beneckea harveyi)).